The following is a 269-amino-acid chain: MLFFTQCFGAVLDLIHLRFQHYKAKRVFSAAGQLVCVVNPTHNLKYVSSRRAVTQSAPEQGSFHPHHLSHHHCHHRHHHHLRHHAHPHHLHHQEAGLHANPVTPCLCMCPLFSCQWEGRLEVVVPHLRQIHRVDILQGAEIVFLATDMHLPAPADWIIMHSCLGHHFLLVLRKQERHEGHPQFFATMMLIGTPTQADCFTYRLELNRNHRRLKWEATPRSVLECVDSVITDGDCLVLNTSLAQLFSDNGSLAIGIAITATEVLPSEAEM.

An SIAH-type; degenerate zinc finger spans residues 61 to 132; the sequence is GSFHPHHLSH…VVPHLRQIHR (72 aa). Residues Cys-107, Cys-114, His-126, and His-131 each coordinate Zn(2+).

Belongs to the SINA (Seven in absentia) family.

It localises to the mitochondrion. Negative regulator of PRKN translocation to damaged mitochondria. Acts probably by destabilizing PINK1 protein, hence inhibiting PRKN targeting to dysfunctional depolarized mitochondria. The sequence is that of Seven in absentia homolog 3 (SIAH3) from Homo sapiens (Human).